A 316-amino-acid chain; its full sequence is tRNA dimethylallyltransferase (316 aa).

13–20 (GPTAVGKT) contributes to the ATP binding site. A substrate-binding site is contributed by 15–20 (TAVGKT). An interaction with substrate tRNA region spans residues 38-41 (DSIQ).

The protein belongs to the IPP transferase family. In terms of assembly, monomer. It depends on Mg(2+) as a cofactor.

It catalyses the reaction adenosine(37) in tRNA + dimethylallyl diphosphate = N(6)-dimethylallyladenosine(37) in tRNA + diphosphate. Its function is as follows. Catalyzes the transfer of a dimethylallyl group onto the adenine at position 37 in tRNAs that read codons beginning with uridine, leading to the formation of N6-(dimethylallyl)adenosine (i(6)A). The sequence is that of tRNA dimethylallyltransferase from Staphylococcus carnosus (strain TM300).